A 589-amino-acid polypeptide reads, in one-letter code: Aspartate--tRNA ligase (589 aa).

Glu-174 is a binding site for L-aspartate. Residues Gln-198–Lys-201 form an aspartate region. Residue Arg-220 coordinates L-aspartate. Residues Arg-220–Glu-222 and Gln-229 contribute to the ATP site. An L-aspartate-binding site is contributed by His-448. An ATP-binding site is contributed by Glu-483. Arg-490 serves as a coordination point for L-aspartate. Gly-535–Arg-538 is an ATP binding site.

Belongs to the class-II aminoacyl-tRNA synthetase family. Type 1 subfamily. Homodimer.

The protein resides in the cytoplasm. The enzyme catalyses tRNA(Asp) + L-aspartate + ATP = L-aspartyl-tRNA(Asp) + AMP + diphosphate. In terms of biological role, catalyzes the attachment of L-aspartate to tRNA(Asp) in a two-step reaction: L-aspartate is first activated by ATP to form Asp-AMP and then transferred to the acceptor end of tRNA(Asp). The polypeptide is Aspartate--tRNA ligase (Xylella fastidiosa (strain 9a5c)).